The chain runs to 244 residues: Glucosamine-6-phosphate deaminase (244 aa).

The active-site Proton acceptor; for enolization step is the Asp67. Asn136 (for ring-opening step) is an active-site residue. The active-site Proton acceptor; for ring-opening step is the His138. The active-site For ring-opening step is the Glu143.

The protein belongs to the glucosamine/galactosamine-6-phosphate isomerase family. NagB subfamily.

The catalysed reaction is alpha-D-glucosamine 6-phosphate + H2O = beta-D-fructose 6-phosphate + NH4(+). It participates in amino-sugar metabolism; N-acetylneuraminate degradation; D-fructose 6-phosphate from N-acetylneuraminate: step 5/5. In terms of biological role, catalyzes the reversible isomerization-deamination of glucosamine 6-phosphate (GlcN6P) to form fructose 6-phosphate (Fru6P) and ammonium ion. This is Glucosamine-6-phosphate deaminase from Clostridium botulinum (strain Okra / Type B1).